A 354-amino-acid polypeptide reads, in one-letter code: Glycerol-3-phosphate dehydrogenase [NAD(P)+] (354 aa).

4 residues coordinate NADPH: Ser27, Phe28, Arg48, and Lys121. 2 residues coordinate sn-glycerol 3-phosphate: Lys121 and Gly149. Ala153 contacts NADPH. 5 residues coordinate sn-glycerol 3-phosphate: Lys204, Asp257, Ser267, Arg268, and Asn269. Residue Lys204 is the Proton acceptor of the active site. Residue Arg268 participates in NADPH binding. 2 residues coordinate NADPH: Val292 and Glu294.

The protein belongs to the NAD-dependent glycerol-3-phosphate dehydrogenase family.

Its subcellular location is the cytoplasm. The catalysed reaction is sn-glycerol 3-phosphate + NAD(+) = dihydroxyacetone phosphate + NADH + H(+). It catalyses the reaction sn-glycerol 3-phosphate + NADP(+) = dihydroxyacetone phosphate + NADPH + H(+). The protein operates within membrane lipid metabolism; glycerophospholipid metabolism. Its function is as follows. Catalyzes the reduction of the glycolytic intermediate dihydroxyacetone phosphate (DHAP) to sn-glycerol 3-phosphate (G3P), the key precursor for phospholipid synthesis. The chain is Glycerol-3-phosphate dehydrogenase [NAD(P)+] from Pseudomonas fluorescens (strain Pf0-1).